The following is a 418-amino-acid chain: Chromo domain-containing protein rhino (418 aa).

A Chromo domain is found at 24 to 74; it reads YVVEKILGKRFVNGRPQVLVKWSGFPNENNTWEPLENVGNCMKLVSDFESE. Low complexity-rich tracts occupy residues 84 to 99 and 107 to 120; these read AKSV…SSGP and SSSK…KSVQ. Disordered stretches follow at residues 84 to 167 and 199 to 337; these read AKSV…TDST and PTKD…RCPR. Residues 131 to 143 are compositionally biased toward basic residues; the sequence is NQKKGKNIKKTAG. Over residues 152–167 the composition is skewed to polar residues; it reads PKTQMPSTSQVSTDST. Basic and acidic residues predominate over residues 218-228; sequence RLIEFPQREDA. Residues 258-275 show a composition bias toward low complexity; that stretch reads GESSSSMSLPTVSSTSSE. The segment covering 276-285 has biased composition (basic and acidic residues); that stretch reads KSIKVTKSEP. Residues 353–418 are required for interaction with del/deadlock; the sequence is TKPFGVNRGL…FESLRIIVPK (66 aa).

In terms of assembly, homodimer in solution. Dimerization is essential for chromatin binding. Component of the Rhino-Deadlock-Cutoff (RDC) complex, composed of rhi/rhino, del/deadlock and cuff/cutoff. Interacts (via C-terminus) with del/deadlock (via N-terminus); this interaction is direct. Two copies of del/deadlock associate with each rhi/rhino dimer. Interacts with cuff/cutoff; this interaction is indirect and is mediated by del/deadlock. Interacts (via Chromo domain) with kipf/kipferl (via C2H2 type zinc finger 4). Interacts (via Chromo domain) with His3/histone H3 (via N-terminus di- or tri-methylated on 'Lys-10' (H3K9me2/3)); this interaction is direct. Two His3 N-terminal tails oriented anti-parallel to each other are required for dimer binding to His3. In terms of tissue distribution, female specific, expressed in both somatic and germline cells but highly enriched in ovaries. In the germarium of the developing oocyte expressed in germline stem cells, cystoblasts and developing germline cysts. Expressed in nurse cells in the germarium and egg chamber.

Its subcellular location is the nucleus. It localises to the chromosome. Involved in piRNA (piwi-interacting RNA)-mediated transposon repression. May be involved in formation of the perinuclear nuage, a subcellular structure implicated in RNA processing that may be involved in transposon RNA surveillance and silencing. Required for ping-pong amplification during piRNA biogenesis, probably by promoting transcription of piRNA precursors. As part of the Rhino-Deadlock-Cutoff (RDC) Complex associates with, and drives non-canonical transcription of germline specific dual-strand piRNA clusters 80F, 38C and 42AB, but not single-stranded piRNA cluster 20A. Induction of piRNA expression is potentially achieved through a mechanism that prevents transcriptional termination and leads to readthrough from flanking transcription units. Recruited to specific chromatin regions by a combination of H3K9me2/3 histone methylation and differentially expressed sequence-specific recruitment factors. This association may involve direct interaction with DNA. Associates with chromatin upon exposure to homologous piRNA and facilitates transcriptional read-through. As part of the RDC complex, involved in suppression of splicing. In ovaries, recruitment to specific heterochromatin clusters is nucleated and stabilized by kipf/kipferl. During oogenesis, involved in axis specification and may regulate chromosome condensation at the onset of a mitotic-like phase that occurs during nurse cell chromosome duplication. Involved in the distribution of mRNAs for proteins that play a role in anterior-posterior and dorsal-ventral axes specification during development of the oocyte, including grk/gurken, osk/oskar and vas/vasa. Mitigates meiotic double strand breaks and interacts with DNA damage signaling to mediate axis specification. This is Chromo domain-containing protein rhino from Drosophila melanogaster (Fruit fly).